A 438-amino-acid polypeptide reads, in one-letter code: Gamma-glutamyl phosphate reductase (438 aa).

It belongs to the gamma-glutamyl phosphate reductase family.

Its subcellular location is the cytoplasm. The catalysed reaction is L-glutamate 5-semialdehyde + phosphate + NADP(+) = L-glutamyl 5-phosphate + NADPH + H(+). It functions in the pathway amino-acid biosynthesis; L-proline biosynthesis; L-glutamate 5-semialdehyde from L-glutamate: step 2/2. In terms of biological role, catalyzes the NADPH-dependent reduction of L-glutamate 5-phosphate into L-glutamate 5-semialdehyde and phosphate. The product spontaneously undergoes cyclization to form 1-pyrroline-5-carboxylate. This Natronomonas pharaonis (strain ATCC 35678 / DSM 2160 / CIP 103997 / JCM 8858 / NBRC 14720 / NCIMB 2260 / Gabara) (Halobacterium pharaonis) protein is Gamma-glutamyl phosphate reductase.